The primary structure comprises 1276 residues: MVEENETGTPGTSRTVTFHDGRKLTDAEHFVFFKVKEVIADKVAEAEILESIRKRSECKPTDEQFISDIINELFYSGEPPKGRKSERFIGPLFDPEKASTASGPMDCTDVVSYDSTHPNISEISKKEEVEMQSAIQQSLASSASQNISRPTMLMSNLEDMVRNPNFSTGLYNSGNTCWLNCLSQVLYSIPKFRSILYHCAPLSWHEQPITNVKIENQQHAELLMLFRGLFAELQFSEMKYIEVGPLINMVDKLSKSSKGPSTIGTQQDATEMLTLIFDWLQRAFDAALHAQLNPEFSNVSDEENLVISDSTTTAPNSDIIGAPPGYNAANLSLPSSSHVDPKSTLNPMYVNEKEPSSTPTSLFGTRSKTIEVNESMDTEAATSSNLPGNSVENHPNPAAPEVDDNKKAFCDKLKESFNNIFSSVCYTESVAEDGTVSVKSNVRNCPQFFQLQVTYGNLHDALEAATFDHGLGNTASHVRNLYDPLPAVIFFGLSRFSFNSNIESKLHDKFTFPKIIFMDRYLKCNKEQLVQLRSHRELCRDSLSEVRAKLSGLRRYPQGNGEVRLEDSFQTVWQAVSNFREFVTFYLKVSQKTFFSREDAHENTAFVGPLTPSTYQSSSDNCSSKFVKDGGKLFPTFTEGFFPGKAAFIETLQNMLEALKTEERDCLAEEARLQEVIDQTYEVPELQQHKYELHAIIVHSGEANRGHYWTYKLKKSIDGLEEWEKLNDQNADRVDWPKVESDSFGTGSRDAPSAYMLMYVRSDAEWLVSADKLTALEAFETIPPDLQEKVLQKRDEFKEKLQRFRENKEFNYQQFSVDSPTVQSTEETPSSFSWYRDELEDIDIGDENANPTKNDYLLNARLDSYSVPIAPDVETSEMKRMVSQMWNQITKIAPRKYTDSQDLLDSNLRSVMEGESGGINFINSRLGYDIHELRSDADNDVEGVYNAFINEYLGLVKDLHELQNSKFVVFVGFQLQRIHVPVLRYLLVRAMAVSELGIISQRANNELSGMSSNSHDKGTAMLQIALLLSHFFELGVMSAWGCRSSLENIHVILNDFKKKNSRGSEQIEVTYCAMIGARNARICNGLLREMAYFLESYSIFFVSQKHIEACTVFSTITMIKLIMQHMASKTLQLIDMEFHLSKNERRVRFEDIIREVVSSVCIIHHWSKSYSKEFQNEINLKELMGLLHLKVEFMVSLTSFEVADPKYECLQAFKAMVVNTVMDLERASNELDYDVLDGAVELRELKKYFKELQLTDVKVNNIITSYDPIIESLVKI.

The 595-residue stretch at 168–762 folds into the USP domain; the sequence is TGLYNSGNTC…SAYMLMYVRS (595 aa). The active-site Nucleophile is the C177. The segment at 375–402 is disordered; it reads SMDTEAATSSNLPGNSVENHPNPAAPEV. Residues 380 to 393 show a composition bias toward polar residues; it reads AATSSNLPGNSVEN. The active-site Proton acceptor is H707.

It belongs to the peptidase C19 family.

It catalyses the reaction Thiol-dependent hydrolysis of ester, thioester, amide, peptide and isopeptide bonds formed by the C-terminal Gly of ubiquitin (a 76-residue protein attached to proteins as an intracellular targeting signal).. This Caenorhabditis elegans protein is Probable ubiquitin carboxyl-terminal hydrolase K02C4.3.